A 406-amino-acid polypeptide reads, in one-letter code: Tryptophan synthase beta chain (406 aa).

Residue K99 is modified to N6-(pyridoxal phosphate)lysine.

This sequence belongs to the TrpB family. Tetramer of two alpha and two beta chains. Pyridoxal 5'-phosphate is required as a cofactor.

The catalysed reaction is (1S,2R)-1-C-(indol-3-yl)glycerol 3-phosphate + L-serine = D-glyceraldehyde 3-phosphate + L-tryptophan + H2O. It functions in the pathway amino-acid biosynthesis; L-tryptophan biosynthesis; L-tryptophan from chorismate: step 5/5. Its function is as follows. The beta subunit is responsible for the synthesis of L-tryptophan from indole and L-serine. This chain is Tryptophan synthase beta chain, found in Allorhizobium ampelinum (strain ATCC BAA-846 / DSM 112012 / S4) (Agrobacterium vitis (strain S4)).